The primary structure comprises 122 residues: MIQVESALQVADNSGAKKVACIKVLGGSKRRYASVGDVIVVSVKEALPHSKVKKGDVMKAVVVRTAKEIRRNDGSYIKFDTNAAVLLNKQGEPVGTRIFGPVARELRARNYMKIVSLAPEVL.

This sequence belongs to the universal ribosomal protein uL14 family. Part of the 50S ribosomal subunit. Forms a cluster with proteins L3 and L19. In the 70S ribosome, L14 and L19 interact and together make contacts with the 16S rRNA in bridges B5 and B8.

Its function is as follows. Binds to 23S rRNA. Forms part of two intersubunit bridges in the 70S ribosome. In Oleidesulfovibrio alaskensis (strain ATCC BAA-1058 / DSM 17464 / G20) (Desulfovibrio alaskensis), this protein is Large ribosomal subunit protein uL14.